We begin with the raw amino-acid sequence, 481 residues long: Zinc metalloproteinase/disintegrin (481 aa).

The N-terminal stretch at 1 to 20 is a signal peptide; it reads MIQVLLVTICLAVFPYQGSS. Residues 21–190 constitute a propeptide that is removed on maturation; that stretch reads IILESGNVDD…KASQLYLTPE (170 aa). Residues 197–392 form the Peptidase M12B domain; the sequence is RHIELAIVVD…KKPQCILNAP (196 aa). Residues E200 and D284 each coordinate Ca(2+). Intrachain disulfides connect C308–C387, C349–C371, and C351–C354. Residue H333 participates in Zn(2+) binding. E334 is a catalytic residue. Residues H337 and H343 each coordinate Zn(2+). Ca(2+)-binding residues include C387 and N390. The propeptide occupies 393–410; the sequence is LRTDTVSTPISGNEFLEA. Positions 400–481 constitute a Disintegrin domain; sequence TPISGNEFLE…ADCPRNGLYG (82 aa). 6 disulfides stabilise this stretch: C414-C429, C416-C424, C423-C446, C437-C443, C442-C467, and C455-C474. A Cell attachment site motif is present at residues 459 to 461; it reads RGD.

This sequence belongs to the venom metalloproteinase (M12B) family. P-II subfamily. P-IIa sub-subfamily. In terms of assembly, monomer. Zn(2+) serves as cofactor. In terms of tissue distribution, expressed by the venom gland.

It is found in the secreted. Its function is as follows. Impairs hemostasis in the envenomed animal. In terms of biological role, inhibits platelet aggregation induced by ADP and collagen. Acts by inhibiting fibrinogen interaction with platelet receptors GPIIb/GPIIIa (ITGA2B/ITGB3). Has antitumor-growth activity. The polypeptide is Zinc metalloproteinase/disintegrin (Protobothrops jerdonii (Jerdon's pitviper)).